A 66-amino-acid chain; its full sequence is U-scoloptoxin(04)-Ssd2a (66 aa).

The N-terminal stretch at 1 to 19 is a signal peptide; sequence MKAIYILSVLLLMMLPILS.

This sequence belongs to the scoloptoxin-04 family. In terms of processing, contains 2 disulfide bonds. In terms of tissue distribution, expressed by the venom gland.

It is found in the secreted. This is U-scoloptoxin(04)-Ssd2a from Scolopendra dehaani (Thai centipede).